The following is a 274-amino-acid chain: Tropomyosin (274 aa).

Residues 1 to 30 (MKLEKDNAMDRADTLEQQNKEANIRAEKAE) form a disordered region. Residues 1–274 (MKLEKDNAMD…DQTFSELSGY (274 aa)) adopt a coiled-coil conformation.

This sequence belongs to the tropomyosin family. Homodimer.

Tropomyosin, in association with the troponin complex, plays a central role in the calcium dependent regulation of muscle contraction. The sequence is that of Tropomyosin from Panulirus stimpsoni (Chinese spiny lobster).